We begin with the raw amino-acid sequence, 198 residues long: MVTTYLLFIVAYLLGSIPFALVVGKIGYGIDIREHGSGNLGGTNTFRTLGKKAGFIVTIADILKGTLATSLPIIFALDIHPLWFGLAAVLGHVYPIFAKFRGGKAVATSAGVLLCYSPVVFAILAVVFFSLLFTTRYVSLSSMVTAVVAVIASIVSGDKIFIIAMCLLAGMVIYKHRANIGRIINKTEPKANFSKKQK.

4 consecutive transmembrane segments (helical) span residues 4-24, 71-91, 113-133, and 147-167; these read TYLLFIVAYLLGSIPFALVVG, LPIIFALDIHPLWFGLAAVLG, LLCYSPVVFAILAVVFFSLLF, and VVAVIASIVSGDKIFIIAMCL.

This sequence belongs to the PlsY family. In terms of assembly, probably interacts with PlsX.

Its subcellular location is the cell membrane. It carries out the reaction an acyl phosphate + sn-glycerol 3-phosphate = a 1-acyl-sn-glycero-3-phosphate + phosphate. It participates in lipid metabolism; phospholipid metabolism. Its function is as follows. Catalyzes the transfer of an acyl group from acyl-phosphate (acyl-PO(4)) to glycerol-3-phosphate (G3P) to form lysophosphatidic acid (LPA). This enzyme utilizes acyl-phosphate as fatty acyl donor, but not acyl-CoA or acyl-ACP. In Bacillus cereus (strain ATCC 10987 / NRS 248), this protein is Glycerol-3-phosphate acyltransferase 2.